Consider the following 188-residue polypeptide: MAENPNVDDLRAPLLAALGAADLALTTVNELVGNMRERAEETRIDTRSRVEESRARVAKLQEVLPEHLSELREKFTADELRKAAEGYLEAATNRYNELVERGEAALERLRSRPVFEDASARAEGYVDQAVELTQEALGTVASQTRAVGGRAAKLVGIELPKKAAAPARKAPAKKAPAKKAPAKKVTQK.

A disordered region spans residues 162–188 (KAAAPARKAPAKKAPAKKAPAKKVTQK). Basic residues predominate over residues 170–188 (APAKKAPAKKAPAKKVTQK).

It to M.tuberculosis HbhA.

Might mediate adherence to host cells by binding sulfated glycoconjugates. The protein is Heparin-binding hemagglutinin homolog (hbhA) of Mycobacterium leprae (strain TN).